The following is a 458-amino-acid chain: GTPase Der (458 aa).

EngA-type G domains follow at residues 4–169 and 178–353; these read PSIA…PKDF and VMMS…TQHR. Residues 10 to 17, 57 to 61, 120 to 123, 184 to 191, 231 to 235, and 296 to 299 each bind GTP; these read GRPNVGKS, DTGGL, NKCE, DTAGI, and NKWD. Residues 354-439 enclose the KH-like domain; that stretch reads MRVTTSVVNE…PIILLWRGKQ (86 aa).

This sequence belongs to the TRAFAC class TrmE-Era-EngA-EngB-Septin-like GTPase superfamily. EngA (Der) GTPase family. As to quaternary structure, associates with the 50S ribosomal subunit.

GTPase that plays an essential role in the late steps of ribosome biogenesis. The protein is GTPase Der of Prochlorococcus marinus (strain MIT 9515).